The primary structure comprises 487 residues: Betaine aldehyde dehydrogenase (487 aa).

The K(+) site is built by Ser26 and Asp93. Gly150 to Trp152 is a binding site for NAD(+). Lys162 (charge relay system) is an active-site residue. Residues Lys176 to Glu179 and Ser229 to Thr232 contribute to the NAD(+) site. Leu244 provides a ligand contact to K(+). Catalysis depends on Glu250, which acts as the Proton acceptor. 3 residues coordinate NAD(+): Gly252, Cys284, and Glu384. Cys284 serves as the catalytic Nucleophile. Cysteine sulfenic acid (-SOH) is present on Cys284. K(+)-binding residues include Lys454 and Gly457. Glu461 (charge relay system) is an active-site residue.

It belongs to the aldehyde dehydrogenase family. In terms of assembly, dimer of dimers. K(+) serves as cofactor.

The catalysed reaction is betaine aldehyde + NAD(+) + H2O = glycine betaine + NADH + 2 H(+). Its pathway is amine and polyamine biosynthesis; betaine biosynthesis via choline pathway; betaine from betaine aldehyde: step 1/1. Functionally, involved in the biosynthesis of the osmoprotectant glycine betaine. Catalyzes the irreversible oxidation of betaine aldehyde to the corresponding acid. In Rhizobium johnstonii (strain DSM 114642 / LMG 32736 / 3841) (Rhizobium leguminosarum bv. viciae), this protein is Betaine aldehyde dehydrogenase.